Here is a 148-residue protein sequence, read N- to C-terminus: Prefoldin subunit alpha (148 aa).

This sequence belongs to the prefoldin subunit alpha family. In terms of assembly, heterohexamer of two alpha and four beta subunits.

It localises to the cytoplasm. In terms of biological role, molecular chaperone capable of stabilizing a range of proteins. Seems to fulfill an ATP-independent, HSP70-like function in archaeal de novo protein folding. This is Prefoldin subunit alpha (pfdA) from Pyrococcus horikoshii (strain ATCC 700860 / DSM 12428 / JCM 9974 / NBRC 100139 / OT-3).